A 178-amino-acid chain; its full sequence is Large ribosomal subunit protein uL10 (178 aa).

It belongs to the universal ribosomal protein uL10 family. In terms of assembly, part of the ribosomal stalk of the 50S ribosomal subunit. The N-terminus interacts with L11 and the large rRNA to form the base of the stalk. The C-terminus forms an elongated spine to which L12 dimers bind in a sequential fashion forming a multimeric L10(L12)X complex.

Functionally, forms part of the ribosomal stalk, playing a central role in the interaction of the ribosome with GTP-bound translation factors. The sequence is that of Large ribosomal subunit protein uL10 from Salinibacter ruber (strain DSM 13855 / M31).